The sequence spans 460 residues: Nitrogenase iron-iron protein beta chain (460 aa).

Residues cysteine 20, cysteine 45, cysteine 104, and serine 143 each contribute to the [8Fe-7S] cluster site.

Belongs to the NifD/NifK/NifE/NifN family. As to quaternary structure, hexamer of two alpha, two beta, and two delta chains. Requires [8Fe-7S] cluster as cofactor.

It carries out the reaction N2 + 8 reduced [2Fe-2S]-[ferredoxin] + 16 ATP + 16 H2O = H2 + 8 oxidized [2Fe-2S]-[ferredoxin] + 2 NH4(+) + 16 ADP + 16 phosphate + 6 H(+). In terms of biological role, this iron-iron protein is part of the nitrogenase complex that catalyzes the key enzymatic reactions in nitrogen fixation. Other nitrogenase complexes utilize a molybdenum-iron protein or a vanadium-iron protein. The polypeptide is Nitrogenase iron-iron protein beta chain (anfK) (Rhodobacter capsulatus (Rhodopseudomonas capsulata)).